A 94-amino-acid polypeptide reads, in one-letter code: Large ribosomal subunit protein bL27 (94 aa).

The interval M1–R25 is disordered.

It belongs to the bacterial ribosomal protein bL27 family.

The chain is Large ribosomal subunit protein bL27 from Gloeothece citriformis (strain PCC 7424) (Cyanothece sp. (strain PCC 7424)).